The primary structure comprises 426 residues: Phosphoribosylamine--glycine ligase (426 aa).

The ATP-grasp domain occupies 113-320 (KSLMTEAKIP…LLELLYRAST (208 aa)). Residue 139–200 (LESKSIPIVI…EEFMEGQEAS (62 aa)) coordinates ATP. Mg(2+) contacts are provided by Glu290 and Asn292.

It belongs to the GARS family. Requires Mg(2+) as cofactor. It depends on Mn(2+) as a cofactor.

It catalyses the reaction 5-phospho-beta-D-ribosylamine + glycine + ATP = N(1)-(5-phospho-beta-D-ribosyl)glycinamide + ADP + phosphate + H(+). It participates in purine metabolism; IMP biosynthesis via de novo pathway; N(1)-(5-phospho-D-ribosyl)glycinamide from 5-phospho-alpha-D-ribose 1-diphosphate: step 2/2. This is Phosphoribosylamine--glycine ligase from Leptospira interrogans serogroup Icterohaemorrhagiae serovar Lai (strain 56601).